The chain runs to 1058 residues: MDSIQQRRGGIVSLSPAQTPRSSDKSARESRSSESNSTNRNDKEKGVNVQVILRCRPLSEDEARIHTPVVISCNENRREVAATQSIAGKHIDRHFAFDKVFGPASQQKDLYDQAICPIVFEVLEGYNCTIFAYGQTGTGKTYTMEGGARKKNGEFPSDAGVIPRAVKQIFDILEAQGAEYSMKVTFLELYNEEISDLLAPEETIKFVDEKSKKSIALMEDGKGSVFVRGLEEEIVSTANEIYKILEKGSAKRRTAETLLNKQSSRSHSIFSITIHIKENTPEGEEMIKCGKLNLVDLAGSENISRSGAREGRAREAGEINKSLLTLGRVINALVEHSGHIPYRDSKLTRLLRESLGGKTKTCVIATISPSIHCLEETLSTLDYAHRAKNIKNKPEINQKMMKSAVMKDLYSEIDRLKQEVYAAREKNGIYIPKDRYIQEEAEKKAMAEKIERLELQSESKDKRVVDLQELYNSQQILTAELSEKLEKTEKKLEETEHSLFDLEEKYRQANATIKEKEFVISNLLKSEKSLVERAFQLRTELESASSDVSNLFSKIERKDKIEDGNRFLIQKFQSQLTQQLELLHKTVASSVTQQEVQLKHMEEDMESFVSTKSEATEELRDRLSKLKRVYGSGIEALDNIAVKLDGNSQSTFSSLNSEVSKHSHELENVFKGFASEADMLLQDLQSSLNKQEEKLITFAQQQRKAHSRAVDTARSVSKVTVEFFKTLDTHATKLTGIVEEAQTVNHKKLSEFENKFEECAANEERQLLEKVAELLANSNARKKNLVQMAVHDLRESASTRTTTLQHEMSTMQDSTSSIKAEWSIHMEKTESSHHEDTSAVESGKKAMQEVLLNCLEKTEMSAHQWRKAQESLVSLERNNVASVDSIVRGGMDANENLRSQFSTAVSSSLDVFDAANSSLLTSIDHSLQLDNDACTKVNSMIIPCCEDLIELKSDHNHKIIEITENAGKCLLDEYVVDEPSCSTPKKRPIDIPSIESIEELRTPASEELLRAFRDEKLSKQANGDAKQQQQQQQQHLIRASSLYEAAVSDSRYPLSAVN.

The interval 1–43 is disordered; that stretch reads MDSIQQRRGGIVSLSPAQTPRSSDKSARESRSSESNSTNRNDK. Over residues 22-32 the composition is skewed to basic and acidic residues; that stretch reads SSDKSARESRS. The Kinesin motor domain maps to 48–390; the sequence is NVQVILRCRP…LDYAHRAKNI (343 aa). Residue 134-141 participates in ATP binding; that stretch reads GQTGTGKT. Residues 438 to 517 adopt a coiled-coil conformation; it reads QEEAEKKAMA…QANATIKEKE (80 aa).

This sequence belongs to the TRAFAC class myosin-kinesin ATPase superfamily. Kinesin family. KIN-5/BimC subfamily.

The protein resides in the cytoplasm. The protein localises to the cytoskeleton. It is found in the spindle. In terms of biological role, responsible for microtubule translocation. May be important for the organization of phragmoplast-specific arrays of microtubules. Plays an essential role in stabilizing the mitotic spindle. Required during mitotic cytokinesis. This is Kinesin-like protein KIN-5D from Arabidopsis thaliana (Mouse-ear cress).